We begin with the raw amino-acid sequence, 176 residues long: Insulin-like growth factor 1 (176 aa).

Positions 45–73 (GPETLCGAELVDTLQFVCGERGFYFSKPT) are b. Cystine bridges form between Cys-50–Cys-92, Cys-62–Cys-105, and Cys-91–Cys-96. The tract at residues 74–85 (GYGPSSRRSHNR) is c. The a stretch occupies residues 86–106 (GIVDECCFQSCELRRLEMYCA). The segment at 107-114 (PVKSGKAA) is d. A propeptide spans 115–176 (RSVRAQRHTD…GNTGGRNYRM (62 aa)) (e peptide). Residues 115–176 (RSVRAQRHTD…GNTGGRNYRM (62 aa)) are disordered. The segment covering 140–161 (RGTERRTAQHPDKTKPKKEVHQ) has biased composition (basic and acidic residues).

This sequence belongs to the insulin family.

The protein localises to the secreted. Its function is as follows. The insulin-like growth factors, isolated from plasma, are structurally and functionally related to insulin but have a much higher growth-promoting activity. Acts as a ligand for IGF1R. Binds to the alpha subunit of IGF1R, leading to the activation of the intrinsic tyrosine kinase activity which autophosphorylates tyrosine residues in the beta subunit thus initiatiating a cascade of down-stream signaling events leading to activation of the PI3K-AKT/PKB and the Ras-MAPK pathways. Binds to integrins. Its binding to integrins and subsequent ternary complex formation with integrins and IGFR1 are essential for IGF1 signaling. In Oncorhynchus mykiss (Rainbow trout), this protein is Insulin-like growth factor 1.